The following is a 225-amino-acid chain: NAD(P)H-quinone oxidoreductase subunit K, chloroplastic (225 aa).

[4Fe-4S] cluster is bound by residues Cys-43, Cys-44, Cys-108, and Cys-139.

This sequence belongs to the complex I 20 kDa subunit family. As to quaternary structure, NDH is composed of at least 16 different subunits, 5 of which are encoded in the nucleus. [4Fe-4S] cluster serves as cofactor.

The protein resides in the plastid. It localises to the chloroplast thylakoid membrane. It carries out the reaction a plastoquinone + NADH + (n+1) H(+)(in) = a plastoquinol + NAD(+) + n H(+)(out). It catalyses the reaction a plastoquinone + NADPH + (n+1) H(+)(in) = a plastoquinol + NADP(+) + n H(+)(out). NDH shuttles electrons from NAD(P)H:plastoquinone, via FMN and iron-sulfur (Fe-S) centers, to quinones in the photosynthetic chain and possibly in a chloroplast respiratory chain. The immediate electron acceptor for the enzyme in this species is believed to be plastoquinone. Couples the redox reaction to proton translocation, and thus conserves the redox energy in a proton gradient. This Nasturtium officinale (Watercress) protein is NAD(P)H-quinone oxidoreductase subunit K, chloroplastic.